We begin with the raw amino-acid sequence, 362 residues long: Divinyl chlorophyll a/b light-harvesting protein PcbF (362 aa).

Transmembrane regions (helical) follow at residues 27–47, 89–109, 150–170, 211–231, 251–271, and 316–336; these read FIGS…ANTL, IAFI…AGLL, FILG…VEWA, VMGG…FHIA, AVLS…AFWC, and LANV…WHAI.

It belongs to the PsbB/PsbC family. IsiA/Pcb subfamily. As to quaternary structure, the antenna complex consists of divinyl chlorophylls (a and b) and divinyl chlorophyll a/b binding proteins and binds more divinyl chlorophyll b than does the antenna complex from high-light-adapted Prochlorococcus. The cofactor is divinyl chlorophyll a. It depends on divinyl chlorophyll b as a cofactor.

The protein localises to the cellular thylakoid membrane. Its function is as follows. The antenna complex functions as a light receptor, it captures and delivers excitation energy to photosystems II and I. The Prochlorales pcb genes are not related to higher plant LHCs. This chain is Divinyl chlorophyll a/b light-harvesting protein PcbF (pcbF), found in Prochlorococcus marinus (strain NATL2A).